We begin with the raw amino-acid sequence, 433 residues long: Homogentisate 1,2-dioxygenase (433 aa).

Residue H288 is the Proton acceptor of the active site. Fe cation is bound by residues H331 and E337. Homogentisate is bound by residues Y346 and H367. H367 contributes to the Fe cation binding site.

It belongs to the homogentisate dioxygenase family. Hexamer; dimer of trimers. Fe cation is required as a cofactor.

The catalysed reaction is homogentisate + O2 = 4-maleylacetoacetate + H(+). It participates in amino-acid degradation; L-phenylalanine degradation; acetoacetate and fumarate from L-phenylalanine: step 4/6. In terms of biological role, involved in the catabolism of homogentisate (2,5-dihydroxyphenylacetate or 2,5-OH-PhAc), a central intermediate in the degradation of phenylalanine and tyrosine. Catalyzes the oxidative ring cleavage of the ar omatic ring of 2,5-dihydroxyphenylacetate to yield maleylacetoacetate. This Pseudomonas putida (strain ATCC 47054 / DSM 6125 / CFBP 8728 / NCIMB 11950 / KT2440) protein is Homogentisate 1,2-dioxygenase.